A 981-amino-acid chain; its full sequence is Ubiquitin carboxyl-terminal hydrolase 15 (981 aa).

An N-acetylalanine modification is found at alanine 2. Positions 2-223 (AEGGAADLDT…KNEDGTWPRG (222 aa)) are mediates interaction with SART3. The 112-residue stretch at 7–118 (ADLDTQRSDI…GQEPIARKVV (112 aa)) folds into the DUSP domain. The disordered stretch occupies residues 216 to 237 (EDGTWPRGPSTPKSPGASNFST). Threonine 226 carries the phosphothreonine modification. Residues 226 to 237 (TPKSPGASNFST) show a composition bias toward polar residues. Serine 229 and serine 242 each carry phosphoserine. Positions 289–933 (CGLSNLGNTC…AAYVLFYQRQ (645 aa)) constitute a USP domain. Residue cysteine 298 is the Nucleophile of the active site. Threonine 602 is subject to Phosphothreonine. The tract at residues 629 to 694 (GSLHCCKDQN…GGDNDSENGL (66 aa)) is disordered. Positions 656–673 (METDEPDDESSQDQELPS) are enriched in acidic residues. Histidine 891 (proton acceptor) is an active-site residue. Residues 952–981 (SAATGIPLESDEDSNDNDNDIENENCMHTN) form a disordered region. The segment covering 960-974 (ESDEDSNDNDNDIEN) has biased composition (acidic residues). A phosphoserine mark is found at serine 961 and serine 965.

The protein belongs to the peptidase C19 family. In terms of assembly, a homodimer structure has been reported; however it is unclear whether the protein form a homodimer in vivo. Identified in a complex with the COP9 signalosome complex (CSN). Interacts with SMAD1, SMAD2 and SMAD3; the interaction is direct. Forms a complex with SMURF2 and SMAD7. Interacts with TGFBR1. Interacts with SART3; the interaction is direct. May interact with RNF20 and RNF40. May interact with PRKN. Interacts with INCA1. As to quaternary structure, (Microbial infection) Interacts with human papillomavirus type 16 protein E6. Phosphorylated. Phosphorylation protects against ubiquitination and subsequent degradation by the proteasome. Post-translationally, ubiquitinated, leading to degradation by the proteasome. In terms of tissue distribution, expressed in skeletal muscle, kidney, heart, placenta, liver, thymus, lung, and ovary, with little or no expression in other tissues.

It localises to the cytoplasm. It is found in the nucleus. Its subcellular location is the mitochondrion. The catalysed reaction is Thiol-dependent hydrolysis of ester, thioester, amide, peptide and isopeptide bonds formed by the C-terminal Gly of ubiquitin (a 76-residue protein attached to proteins as an intracellular targeting signal).. In terms of biological role, hydrolase that removes conjugated ubiquitin from target proteins and regulates various pathways such as the TGF-beta receptor signaling, NF-kappa-B and RNF41/NRDP1-PRKN pathways. Acts as a key regulator of TGF-beta receptor signaling pathway, but the precise mechanism is still unclear: according to a report, acts by promoting deubiquitination of monoubiquitinated R-SMADs (SMAD1, SMAD2 and/or SMAD3), thereby alleviating inhibition of R-SMADs and promoting activation of TGF-beta target genes. According to another reports, regulates the TGF-beta receptor signaling pathway by mediating deubiquitination and stabilization of TGFBR1, leading to an enhanced TGF-beta signal. Able to mediate deubiquitination of monoubiquitinated substrates, 'Lys-27'-, 'Lys-48'- and 'Lys-63'-linked polyubiquitin chains. May also regulate gene expression and/or DNA repair through the deubiquitination of histone H2B. Acts as an inhibitor of mitophagy by counteracting the action of parkin (PRKN): hydrolyzes cleavage of 'Lys-48'- and 'Lys-63'-linked polyubiquitin chains attached by parkin on target proteins such as MFN2, thereby reducing parkin's ability to drive mitophagy. Acts as an associated component of COP9 signalosome complex (CSN) and regulates different pathways via this association: regulates NF-kappa-B by mediating deubiquitination of NFKBIA and deubiquitinates substrates bound to VCP. Involved in endosome organization by mediating deubiquitination of SQSTM1: ubiquitinated SQSTM1 forms a molecular bridge that restrains cognate vesicles in the perinuclear region and its deubiquitination releases target vesicles for fast transport into the cell periphery. Acts as a negative regulator of antifungal immunity by mediating 'Lys-27'-linked deubiquitination of CARD9, thereby inactivating CARD9. Its function is as follows. (Microbial infection) Protects APC and human papillomavirus type 16 protein E6 against degradation via the ubiquitin proteasome pathway. In Homo sapiens (Human), this protein is Ubiquitin carboxyl-terminal hydrolase 15.